The chain runs to 448 residues: ATP-dependent protease ATPase subunit HslU (448 aa).

Residues V21, 63 to 68 (GVGKTE), D260, E326, and R398 contribute to the ATP site.

The protein belongs to the ClpX chaperone family. HslU subfamily. In terms of assembly, a double ring-shaped homohexamer of HslV is capped on each side by a ring-shaped HslU homohexamer. The assembly of the HslU/HslV complex is dependent on binding of ATP.

Its subcellular location is the cytoplasm. ATPase subunit of a proteasome-like degradation complex; this subunit has chaperone activity. The binding of ATP and its subsequent hydrolysis by HslU are essential for unfolding of protein substrates subsequently hydrolyzed by HslV. HslU recognizes the N-terminal part of its protein substrates and unfolds these before they are guided to HslV for hydrolysis. The sequence is that of ATP-dependent protease ATPase subunit HslU from Sulfurihydrogenibium sp. (strain YO3AOP1).